A 91-amino-acid polypeptide reads, in one-letter code: Elongation factor 1-beta (91 aa).

This sequence belongs to the EF-1-beta/EF-1-delta family.

Functionally, promotes the exchange of GDP for GTP in EF-1-alpha/GDP, thus allowing the regeneration of EF-1-alpha/GTP that could then be used to form the ternary complex EF-1-alpha/GTP/AAtRNA. This chain is Elongation factor 1-beta (ef1b), found in Pyrococcus abyssi (strain GE5 / Orsay).